Reading from the N-terminus, the 536-residue chain is Protein ST7 homolog (536 aa).

2 consecutive transmembrane segments (helical) span residues 3 to 23 and 49 to 69; these read CSWT…LFFL and FYVA…IFEW. Residues 192–219 adopt a coiled-coil conformation; it reads AEEDTETVAQAENVLRRALRAIENTLST. A helical transmembrane segment spans residues 464–484; it reads STLGMLIQTFACLAICILAVL.

Belongs to the ST7 family.

The protein resides in the membrane. The polypeptide is Protein ST7 homolog (Caenorhabditis briggsae).